The sequence spans 445 residues: Phosphoglucosamine mutase (445 aa).

The active-site Phosphoserine intermediate is Ser102. Ser102, Asp241, Asp243, and Asp245 together coordinate Mg(2+). Residue Ser102 is modified to Phosphoserine.

The protein belongs to the phosphohexose mutase family. Requires Mg(2+) as cofactor. Post-translationally, activated by phosphorylation.

The catalysed reaction is alpha-D-glucosamine 1-phosphate = D-glucosamine 6-phosphate. In terms of biological role, catalyzes the conversion of glucosamine-6-phosphate to glucosamine-1-phosphate. This Aliivibrio fischeri (strain MJ11) (Vibrio fischeri) protein is Phosphoglucosamine mutase.